We begin with the raw amino-acid sequence, 241 residues long: Chloride intracellular channel protein 1 (241 aa).

Position 2 is an N-acetylalanine (A2). Residues 2–90 are required for insertion into the membrane; that stretch reads AEEQPQVELF…EEFLEAVLCP (89 aa). At K13 the chain carries N6-acetyllysine. A glutathione-binding site is contributed by C24. C24 bears the S-glutathionyl cysteine; alternate mark. The short motif at 24-27 is the G-site element; that stretch reads CPFS. C24 and C59 are oxidised to a cystine. The helical transmembrane segment at 26–46 threads the bilayer; the sequence is FSQRLFMVLWLKGVTFNVTTV. L64 and T77 together coordinate glutathione. One can recognise a GST C-terminal domain in the interval 93–233; sequence YPKLAALNPE…PDDEEIELAY (141 aa). K119 carries the post-translational modification N6-acetyllysine. S121 is subject to Phosphoserine. K131 carries the post-translational modification N6-acetyllysine. Residues S156 and S211 each carry the phosphoserine modification. Position 233 is a phosphotyrosine (Y233).

It belongs to the chloride channel CLIC family. Monomer. Homodimer (in vitro). Interacts with TRAPPC2. Dimerization requires a conformation change that leads to the exposure of a large hydrophobic surface. In vivo, this may lead to membrane insertion. Interacts with AKAP9. Hydrogen peroxide treatment causes a conformation change, leading to dimerization and formation of an intramolecular disulfide bond between Cys-24 and Cys-59. As to expression, expression is prominent in heart, placenta, liver, kidney and pancreas.

The protein localises to the nucleus. Its subcellular location is the nucleus membrane. It is found in the cytoplasm. It localises to the cell membrane. The protein resides in the endoplasmic reticulum. The catalysed reaction is L-dehydroascorbate + 2 glutathione = glutathione disulfide + L-ascorbate. It carries out the reaction chloride(in) = chloride(out). The enzyme catalyses iodide(out) = iodide(in). It catalyses the reaction thiocyanate(in) = thiocyanate(out). The catalysed reaction is nitrate(in) = nitrate(out). It carries out the reaction bromide(in) = bromide(out). The enzyme catalyses fluoride(in) = fluoride(out). Its activity is regulated as follows. The oxidoreductase activity is inhibited by rapamycin, amphotericin B and IAA-94. The channel conductance is regulated by pH and redox membrane potential. Inhibited by IAA-94. Functionally, in the soluble state, catalyzes glutaredoxin-like thiol disulfide exchange reactions with reduced glutathione as electron donor. Reduces selenite and dehydroascorbate and may act as an antioxidant during oxidative stress response. Can insert into membranes and form voltage-dependent multi-ion conductive channels. Membrane insertion seems to be redox-regulated and may occur only under oxidizing conditions. Involved in regulation of the cell cycle. The polypeptide is Chloride intracellular channel protein 1 (Homo sapiens (Human)).